Reading from the N-terminus, the 289-residue chain is Glucose and ribitol dehydrogenase homolog 2 (289 aa).

The disordered stretch occupies residues 1–32 (MASGFPPQKQETQPGIQHVMEPTPEFSSSNYK). 43-67 (LVTGGDSGIGKAVCHCYALEGASVA) provides a ligand contact to NAD(+). Substrate is bound at residue Ser-180. Tyr-193 acts as the Proton acceptor in catalysis.

It belongs to the short-chain dehydrogenases/reductases (SDR) family.

Its function is as follows. May act as a short alcohol-polyol-sugar dehydrogenase possibly related to carbohydrate metabolism and the acquisition of desiccation tolerance. May also be involved in signal transduction. This chain is Glucose and ribitol dehydrogenase homolog 2, found in Arabidopsis thaliana (Mouse-ear cress).